The primary structure comprises 609 residues: Glutamine--fructose-6-phosphate aminotransferase [isomerizing] (609 aa).

Residue Cys2 is the Nucleophile; for GATase activity of the active site. The region spanning 2–218 (CGIVGAVAQR…EGDVAEVTRR (217 aa)) is the Glutamine amidotransferase type-2 domain. SIS domains are found at residues 286 to 426 (AAEF…HNGM) and 458 to 599 (LAED…VDQP). Lys604 serves as the catalytic For Fru-6P isomerization activity.

In terms of assembly, homodimer.

Its subcellular location is the cytoplasm. The enzyme catalyses D-fructose 6-phosphate + L-glutamine = D-glucosamine 6-phosphate + L-glutamate. In terms of biological role, catalyzes the first step in hexosamine metabolism, converting fructose-6P into glucosamine-6P using glutamine as a nitrogen source. This chain is Glutamine--fructose-6-phosphate aminotransferase [isomerizing], found in Shewanella oneidensis (strain ATCC 700550 / JCM 31522 / CIP 106686 / LMG 19005 / NCIMB 14063 / MR-1).